Consider the following 411-residue polypeptide: LL-diaminopimelate aminotransferase (411 aa).

Tyr-15 and Gly-42 together coordinate substrate. Residues Tyr-72, 108–109 (AK), Tyr-132, Asn-188, Tyr-219, and 247–249 (SFS) contribute to the pyridoxal 5'-phosphate site. Residues Lys-109, Tyr-132, and Asn-188 each coordinate substrate. Lys-250 is modified (N6-(pyridoxal phosphate)lysine). Pyridoxal 5'-phosphate-binding residues include Arg-258 and Asn-293. 2 residues coordinate substrate: Asn-293 and Arg-389.

The protein belongs to the class-I pyridoxal-phosphate-dependent aminotransferase family. LL-diaminopimelate aminotransferase subfamily. In terms of assembly, homodimer. Requires pyridoxal 5'-phosphate as cofactor.

The enzyme catalyses (2S,6S)-2,6-diaminopimelate + 2-oxoglutarate = (S)-2,3,4,5-tetrahydrodipicolinate + L-glutamate + H2O + H(+). It participates in amino-acid biosynthesis; L-lysine biosynthesis via DAP pathway; LL-2,6-diaminopimelate from (S)-tetrahydrodipicolinate (aminotransferase route): step 1/1. Functionally, involved in the synthesis of meso-diaminopimelate (m-DAP or DL-DAP), required for both lysine and peptidoglycan biosynthesis. Catalyzes the direct conversion of tetrahydrodipicolinate to LL-diaminopimelate. The chain is LL-diaminopimelate aminotransferase from Desulfitobacterium hafniense (strain Y51).